A 211-amino-acid polypeptide reads, in one-letter code: Thymidine kinase (211 aa).

Residues 9–16 and 87–90 each bind ATP; these read STMNAGKS and DEAQ. The Proton acceptor role is filled by glutamate 88. Zn(2+) is bound by residues cysteine 145, cysteine 147, cysteine 182, and histidine 185.

It belongs to the thymidine kinase family. In terms of assembly, homotetramer.

The protein localises to the cytoplasm. The enzyme catalyses thymidine + ATP = dTMP + ADP + H(+). The chain is Thymidine kinase from Rhodopirellula baltica (strain DSM 10527 / NCIMB 13988 / SH1).